A 123-amino-acid chain; its full sequence is Omega-oxotoxin-Ot1a (123 aa).

The first 16 residues, 1 to 16 (MKIVLVFVCTLYLAQA), serve as a signal peptide directing secretion. Positions 17–54 (TYLSEQDVNEVSEFLEALDQANEAASEMVEAAETEEAR) are excised as a propeptide. The region spanning 55-122 (DWECLPLHSS…GKINTCDKYK (68 aa)) is the Oxytoxin-type inhibitor cystine knot (ICK) domain. Intrachain disulfides connect Cys58-Cys72, Cys65-Cys77, Cys69-Cys118, Cys71-Cys106, and Cys79-Cys104.

This sequence belongs to the spiderine family. Spiderine subfamily. In terms of processing, mass spectrometry data suggest a carboxylated free C-terminal residue. In terms of tissue distribution, expressed by the venom gland.

The protein resides in the secreted. Its function is as follows. Weak blocker of vertebrate P/Q-, N- and L-type voltage-gated calcium channels (Cav1 and Cav2). Is both paralytic and lethal when injected into lepidopteran larvae. Is not toxic to mice. In Oxyopes takobius (Lynx spider), this protein is Omega-oxotoxin-Ot1a.